A 371-amino-acid chain; its full sequence is Isopentenyl-diphosphate delta-isomerase (371 aa).

9–10 contributes to the substrate binding site; the sequence is RK. Residues threonine 66, 67 to 69, serine 100, and asparagine 128 each bind FMN; that span reads GMT. Residue 100–102 coordinates substrate; sequence SQR. Glutamine 167 lines the substrate pocket. Glutamate 168 is a binding site for Mg(2+). FMN-binding positions include lysine 199, serine 224, threonine 229, 278–280, and 299–300; these read GMR and AL.

The protein belongs to the IPP isomerase type 2 family. In terms of assembly, homooctamer. Dimer of tetramers. The cofactor is FMN. Requires NADPH as cofactor. Mg(2+) serves as cofactor.

It is found in the cytoplasm. The enzyme catalyses isopentenyl diphosphate = dimethylallyl diphosphate. In terms of biological role, involved in the biosynthesis of isoprenoids. Catalyzes the 1,3-allylic rearrangement of the homoallylic substrate isopentenyl (IPP) to its allylic isomer, dimethylallyl diphosphate (DMAPP). The chain is Isopentenyl-diphosphate delta-isomerase from Pyrococcus horikoshii (strain ATCC 700860 / DSM 12428 / JCM 9974 / NBRC 100139 / OT-3).